The following is a 457-amino-acid chain: Zinc finger protein ZIPIC (457 aa).

The 82-residue stretch at 3-84 (CCICQFSVRV…ILELIHSPYM (82 aa)) folds into the ZAD domain. C2H2-type zinc fingers lie at residues 257-280 (IQCP…KREH), 284-306 (YVCD…LQNH), 312-334 (FACP…MAWH), 340-362 (YQCD…KMIH), 369-391 (LECQ…MRSH), and 397-419 (FACP…LREH). A C2H2-type 7; degenerate zinc finger spans residues 430–448 (FHCSKCTHTFINEQNYDAH).

As to quaternary structure, interacts (via region between the ZAD domain and the first zinc finger domain) with Cp190 (via centrosomal targeting M domain); the interaction is direct. Interacts with pita.

The protein localises to the nucleus. It localises to the chromosome. Its function is as follows. Insulator DNA-binding protein. Recruits Cp190 and cooperatively binds to chromatin promoter regions to exert transcriptional regulator and chromatin insulator functions. Chromatin insulators are regulatory elements that establish independent domains of transcriptional activity within eukaryotic genomes. Insulators are proposed to structure the chromatin fiber into independent domains of differing transcriptional potential by promoting the formation of distinct chromatin loops to form topologically associating domains (TADs). Chromatin binding sites often cluster with those of other insulator DNA-binding proteins such as pita, CTCF and BEAF-32, but not Su(Hw). In Drosophila melanogaster (Fruit fly), this protein is Zinc finger protein ZIPIC.